The following is a 151-amino-acid chain: MFDVIAFLVQEYRDFSACPGPDDLARKLAAVGFEDDVIHDALDWLSSLLAQGAVPEVLAESRLPRILTQEEREGLPLEVQDFVLFLDRVAAVNNVQREQILDRLMDVPPDERSLDAARLTVLAVLWRHAAEVDALIAEELMVAIDGPMPLQ.

The protein belongs to the Smg family.

In Laribacter hongkongensis (strain HLHK9), this protein is Protein Smg homolog.